We begin with the raw amino-acid sequence, 126 residues long: Class I hydrophobin 1 (126 aa).

The N-terminal stretch at 1 to 16 (MQYMTIVAFLAATVAA) is a signal peptide. Cystine bridges form between Cys-38/Cys-100, Cys-46/Cys-94, Cys-47/Cys-75, and Cys-101/Cys-119.

It belongs to the fungal hydrophobin family.

The protein localises to the secreted. It is found in the cell wall. Aerial growth, conidiation, and dispersal of filamentous fungi in the environment rely upon a capability of their secreting small amphipathic proteins called hydrophobins (HPBs) with low sequence identity. Class I can self-assemble into an outermost layer of rodlet bundles on aerial cell surfaces, conferring cellular hydrophobicity that supports fungal growth, development and dispersal; whereas Class II form highly ordered films at water-air interfaces through intermolecular interactions but contribute nothing to the rodlet structure. HYD1 and HYD2 are required for the structural integrity of the long aerial chains of microconidia. Does not seem to be important for the ability to cause seedling disease. This is Class I hydrophobin 1 from Gibberella moniliformis (Maize ear and stalk rot fungus).